We begin with the raw amino-acid sequence, 115 residues long: Putative membrane protein insertion efficiency factor (115 aa).

This sequence belongs to the UPF0161 family.

The protein localises to the cell membrane. Its function is as follows. Could be involved in insertion of integral membrane proteins into the membrane. This chain is Putative membrane protein insertion efficiency factor, found in Mycobacterium avium (strain 104).